A 214-amino-acid chain; its full sequence is Large ribosomal subunit protein uL16 (214 aa).

Arginine 32 is subject to Citrulline. A Glycyl lysine isopeptide (Lys-Gly) (interchain with G-Cter in SUMO2) cross-link involves residue lysine 175. Lysine 188 participates in a covalent cross-link: Glycyl lysine isopeptide (Lys-Gly) (interchain with G-Cter in ubiquitin).

It belongs to the universal ribosomal protein uL16 family. As to quaternary structure, component of the large ribosomal subunit. Mature ribosomes consist of a small (40S) and a large (60S) subunit. The 40S subunit contains about 33 different proteins and 1 molecule of RNA (18S). The 60S subunit contains about 49 different proteins and 3 molecules of RNA (28S, 5.8S and 5S). Citrullinated by PADI4. Post-translationally, ufmylated by UFL1.

It is found in the cytoplasm. Its function is as follows. Component of the large ribosomal subunit. Plays a role in the formation of actively translating ribosomes. May play a role in the embryonic brain development. The sequence is that of Large ribosomal subunit protein uL16 from Homo sapiens (Human).